The chain runs to 54 residues: Large ribosomal subunit protein bL32c (54 aa).

Residues 1 to 20 are compositionally biased toward basic residues; that stretch reads MAVPKKRVSKSKRDMRKTTW. The interval 1 to 54 is disordered; that stretch reads MAVPKKRVSKSKRDMRKTTWKNKASKEAKKALSLAKSVSTGKSKSKGFQIKSSN. Positions 31-42 are enriched in low complexity; it reads ALSLAKSVSTGK.

The protein belongs to the bacterial ribosomal protein bL32 family.

It localises to the plastid. Its subcellular location is the chloroplast. This Chlorokybus atmophyticus (Soil alga) protein is Large ribosomal subunit protein bL32c.